Reading from the N-terminus, the 350-residue chain is Protein FAM118B (350 aa).

N-acetylalanine is present on alanine 2. Residue serine 9 is modified to Phosphoserine. The interval 330 to 350 (AREGQLNGSSAAHGEIRGCST) is disordered.

Belongs to the FAM118 family.

The protein resides in the nucleus. It is found in the cajal body. In terms of biological role, may play a role in Cajal bodies formation. The chain is Protein FAM118B (Fam118b) from Rattus norvegicus (Rat).